A 177-amino-acid polypeptide reads, in one-letter code: Large ribosomal subunit protein uL6 (177 aa).

It belongs to the universal ribosomal protein uL6 family. In terms of assembly, part of the 50S ribosomal subunit.

In terms of biological role, this protein binds to the 23S rRNA, and is important in its secondary structure. It is located near the subunit interface in the base of the L7/L12 stalk, and near the tRNA binding site of the peptidyltransferase center. The polypeptide is Large ribosomal subunit protein uL6 (Nitrobacter winogradskyi (strain ATCC 25391 / DSM 10237 / CIP 104748 / NCIMB 11846 / Nb-255)).